Here is a 116-residue protein sequence, read N- to C-terminus: Large ribosomal subunit protein bL17 (116 aa).

This sequence belongs to the bacterial ribosomal protein bL17 family. In terms of assembly, part of the 50S ribosomal subunit. Contacts protein L32.

The sequence is that of Large ribosomal subunit protein bL17 from Sulfurimonas denitrificans (strain ATCC 33889 / DSM 1251) (Thiomicrospira denitrificans (strain ATCC 33889 / DSM 1251)).